The chain runs to 215 residues: Peptide methionine sulfoxide reductase MsrA (215 aa).

Residue Cys-58 is part of the active site.

This sequence belongs to the MsrA Met sulfoxide reductase family.

It catalyses the reaction L-methionyl-[protein] + [thioredoxin]-disulfide + H2O = L-methionyl-(S)-S-oxide-[protein] + [thioredoxin]-dithiol. The catalysed reaction is [thioredoxin]-disulfide + L-methionine + H2O = L-methionine (S)-S-oxide + [thioredoxin]-dithiol. Its function is as follows. Has an important function as a repair enzyme for proteins that have been inactivated by oxidation. Catalyzes the reversible oxidation-reduction of methionine sulfoxide in proteins to methionine. The polypeptide is Peptide methionine sulfoxide reductase MsrA (Pseudomonas savastanoi pv. phaseolicola (strain 1448A / Race 6) (Pseudomonas syringae pv. phaseolicola (strain 1448A / Race 6))).